The following is a 128-amino-acid chain: Keratin-associated protein 2-3 (128 aa).

The 10 X 5 AA repeats of C-C-[CDPQRWG]-[APRS]-[CIPSTVD] stretch occupies residues 5-112 (CCGSTLSSLS…SVQSPCCRPP (108 aa)).

It belongs to the KRTAP type 2 family. Interacts with hair keratins.

In terms of biological role, in the hair cortex, hair keratin intermediate filaments are embedded in an interfilamentous matrix, consisting of hair keratin-associated proteins (KRTAP), which are essential for the formation of a rigid and resistant hair shaft through their extensive disulfide bond cross-linking with abundant cysteine residues of hair keratins. The matrix proteins include the high-sulfur and high-glycine-tyrosine keratins. The protein is Keratin-associated protein 2-3 (KRTAP2-3) of Homo sapiens (Human).